Reading from the N-terminus, the 3255-residue chain is Genome polyprotein (3255 aa).

In terms of domain architecture, Peptidase S30 spans 292 to 437; sequence VMNQQTLMAF…HSITHRMVQY (146 aa). Residues His-345, Asp-354, and Ser-388 each act as for P1 proteinase activity in the active site. The Involved in interaction with stylet and aphid transmission motif lies at 489-492; it reads KITC. The Involved in virions binding and aphid transmission signature appears at 747-749; the sequence is PTK. The 123-residue stretch at 773–895 folds into the Peptidase C6 domain; it reads MFVTKDGYCY…ESEMQHYRVG (123 aa). Active-site for helper component proteinase activity residues include Cys-781 and His-854. The 153-residue stretch at 1397-1549 folds into the Helicase ATP-binding domain; that stretch reads EIAHNEYRDI…PMHMVDIATE (153 aa). An ATP-binding site is contributed by 1410–1417; it reads GGVGSGKS. Residues 1499–1502 carry the DECH box motif; sequence DECH. Positions 1568–1727 constitute a Helicase C-terminal domain; that stretch reads DATKKGDNIL…GLPVMTSNVS (160 aa). Residues 2062–2069 carry the Nuclear localization signal motif; that stretch reads EKGKKSGK. At Tyr-2084 the chain carries O-(5'-phospho-RNA)-tyrosine. A Peptidase C4 domain is found at 2215-2433; sequence SKTLFRGLRD…MVWGGINLIN (219 aa). Active-site for nuclear inclusion protein A activity residues include His-2260, Asp-2295, and Cys-2365. The RdRp catalytic domain occupies 2699–2823; that stretch reads WVYCDADGSQ…AIKPEHESLL (125 aa). The interval 2980–3028 is disordered; it reads AKLDAGQGSKTDDKQKNSADPKDNIITEKGSGSGQMKKDDDINAGLHGK. Over residues 2989 to 3005 the composition is skewed to basic and acidic residues; it reads KTDDKQKNSADPKDNII. Residue Thr-3237 is modified to Phosphothreonine.

This sequence belongs to the potyviridae genome polyprotein family. As to quaternary structure, interacts with host eIF4E protein (via cap-binding region); this interaction mediates the translation of the VPg-viral RNA conjugates. Part of a complex that comprises VPg, RNA, host EIF4E and EIF4G; this interaction mediates the translation of the VPg-viral RNA conjugates. VPg is uridylylated by the polymerase and is covalently attached to the 5'-end of the genomic RNA. This uridylylated form acts as a nucleotide-peptide primer for the polymerase. In terms of processing, potyviral RNA is expressed as two polyproteins which undergo post-translational proteolytic processing. Genome polyprotein is processed by NIa-pro, P1 and HC-pro proteinases resulting in the production of at least ten individual proteins. P3N-PIPO polyprotein is cleaved by P1 and HC-pro proteinases resulting in the production of three individual proteins. The P1 proteinase and the HC-pro cleave only their respective C-termini autocatalytically. 6K1 is essential for proper proteolytic separation of P3 from CI.

The protein resides in the host cytoplasmic vesicle. It is found in the host nucleus. It localises to the virion. The enzyme catalyses RNA(n) + a ribonucleoside 5'-triphosphate = RNA(n+1) + diphosphate. The catalysed reaction is Hydrolyzes glutaminyl bonds, and activity is further restricted by preferences for the amino acids in P6 - P1' that vary with the species of potyvirus, e.g. Glu-Xaa-Xaa-Tyr-Xaa-Gln-|-(Ser or Gly) for the enzyme from tobacco etch virus. The natural substrate is the viral polyprotein, but other proteins and oligopeptides containing the appropriate consensus sequence are also cleaved.. It catalyses the reaction Hydrolyzes a Gly-|-Gly bond at its own C-terminus, commonly in the sequence -Tyr-Xaa-Val-Gly-|-Gly, in the processing of the potyviral polyprotein.. Its function is as follows. Required for aphid transmission and also has proteolytic activity. Only cleaves a Gly-Gly dipeptide at its own C-terminus. Interacts with virions and aphid stylets. Acts as a suppressor of RNA-mediated gene silencing, also known as post-transcriptional gene silencing (PTGS), a mechanism of plant viral defense that limits the accumulation of viral RNAs. May have RNA-binding activity. Has helicase activity. It may be involved in replication. Functionally, indispensable for virus replication. Reduces the abundance of host transcripts related to jasmonic acid biosynthesis therefore altering the host defenses. In order to increase its own stability, decreases host protein degradation pathways. In terms of biological role, indispensable for virus replication. Its function is as follows. Mediates the cap-independent, EIF4E-dependent translation of viral genomic RNAs. Binds to the cap-binding site of host EIF4E and thus interferes with the host EIF4E-dependent mRNA export and translation. VPg-RNA directly binds EIF4E and is a template for transcription. Also forms trimeric complexes with EIF4E-EIF4G, which are templates for translation. Has RNA-binding and proteolytic activities. Functionally, an RNA-dependent RNA polymerase that plays an essential role in the virus replication. In terms of biological role, involved in aphid transmission, cell-to-cell and systemis movement, encapsidation of the viral RNA and in the regulation of viral RNA amplification. The sequence is that of Genome polyprotein from Lettuce mosaic virus (strain 0 / isolate French) (LMV).